The following is a 316-amino-acid chain: HPr kinase/phosphorylase (316 aa).

Active-site residues include H143 and K164. Residue 158 to 165 (GEAGSGKS) coordinates ATP. Mg(2+) is bound at residue S165. D182 serves as the catalytic Proton acceptor; for phosphorylation activity. Proton donor; for dephosphorylation activity. The important for the catalytic mechanism of both phosphorylation and dephosphorylation stretch occupies residues 206-215 (LEVRGLGVLN). Residue E207 participates in Mg(2+) binding. Residue R251 is part of the active site. An important for the catalytic mechanism of dephosphorylation region spans residues 272 to 277 (PVMPGR).

The protein belongs to the HPrK/P family. Homohexamer. It depends on Mg(2+) as a cofactor.

The enzyme catalyses [HPr protein]-L-serine + ATP = [HPr protein]-O-phospho-L-serine + ADP + H(+). The catalysed reaction is [HPr protein]-O-phospho-L-serine + phosphate + H(+) = [HPr protein]-L-serine + diphosphate. Catalyzes the ATP- as well as the pyrophosphate-dependent phosphorylation of a specific serine residue in HPr, a phosphocarrier protein of the phosphoenolpyruvate-dependent sugar phosphotransferase system (PTS). HprK/P also catalyzes the pyrophosphate-producing, inorganic phosphate-dependent dephosphorylation (phosphorolysis) of seryl-phosphorylated HPr (P-Ser-HPr). This is HPr kinase/phosphorylase from Xanthomonas campestris pv. campestris (strain 8004).